A 261-amino-acid polypeptide reads, in one-letter code: Protein LIKE COV 2 (261 aa).

The disordered stretch occupies residues 1–38 (MAEGKEATTSSLSQGLTPHQDPDDAPKSPPNSPNSSTR). Topologically, residues 1 to 56 (MAEGKEATTSSLSQGLTPHQDPDDAPKSPPNSPNSSTRKACYGVLQSWVSKKFMTG) are cytoplasmic. Residues 7–17 (ATTSSLSQGLT) are compositionally biased toward polar residues. A helical transmembrane segment spans residues 57–77 (FVVLFPVAVTFLITWWFIQFV). Residues 78-91 (DGFFSPIYENLGVD) are Extracellular-facing. A helical transmembrane segment spans residues 92–112 (IFGLGFITSVLFTFFVGIFAS). The Cytoplasmic portion of the chain corresponds to 113–261 (SWLGSTVFWL…HSLRVPLNRL (149 aa)).

This sequence belongs to the plant COV1 protein family.

It localises to the membrane. The protein is Protein LIKE COV 2 of Arabidopsis thaliana (Mouse-ear cress).